Reading from the N-terminus, the 127-residue chain is Translation initiation factor 5A (127 aa).

The residue at position 36 (Lys-36) is a Hypusine.

The protein belongs to the eIF-5A family.

Its subcellular location is the cytoplasm. Functionally, functions by promoting the formation of the first peptide bond. The protein is Translation initiation factor 5A (eif5a) of Halobacterium salinarum (strain ATCC 700922 / JCM 11081 / NRC-1) (Halobacterium halobium).